Here is a 194-residue protein sequence, read N- to C-terminus: DNA replication complex GINS protein PSF3 (194 aa).

It belongs to the GINS3/PSF3 family. As to quaternary structure, component of the GINS complex which is a heterotetramer of SLD5, PSF1, PSF2 and PSF3.

It localises to the nucleus. In terms of biological role, functions as part of the GINS complex which plays an essential role in the initiation of DNA replication by binding to DNA replication origins and facilitating the assembly of the DNA replication machinery. This Saccharomyces cerevisiae (strain ATCC 204508 / S288c) (Baker's yeast) protein is DNA replication complex GINS protein PSF3.